The following is a 437-amino-acid chain: Sodium/bile acid cotransporter 4 (437 aa).

Topologically, residues 1–103 (MDSLDNTTLL…PPFWDTPLNH (103 aa)) are extracellular. N6 and N20 each carry an N-linked (GlcNAc...) asparagine glycan. The segment at 15-79 (SLLPDNLTLS…SSSLTVGVAG (65 aa)) is disordered. Positions 22–41 (TLSPNAGSPSASTLSPLAVT) are enriched in polar residues. Low complexity predominate over residues 42–74 (SSPGPGLSLAPSPSIGFSPEATPTPEPTSSSLT). The chain crosses the membrane as a helical span at residues 104-124 (GLNVFVGAALCITMLGLGCTV). The Cytoplasmic portion of the chain corresponds to 125–140 (DVNHFGAHVRRPVGAL). A helical transmembrane segment spans residues 141–161 (LAALCQFGFLPLLAFLLALIF). Residues 162 to 197 (KLDEVAAVAVLLCGCCPGGNLSNLMSLLVDGDMNLS) lie on the Extracellular side of the membrane. N-linked (GlcNAc...) asparagine glycosylation is found at N181 and N195. The helical transmembrane segment at 198–218 (IIMTISSTLLALVLMPLCLWI) threads the bilayer. Over 219–233 (YSRAWINTPLVQLLP) the chain is Cytoplasmic. A helical transmembrane segment spans residues 234-254 (LGAVTLTLCSTLIPIGLGVFI). Residues 255–267 (RYKYNRVADYIVK) lie on the Extracellular side of the membrane. A helical membrane pass occupies residues 268-288 (VSLWSLLVTLVVLFIMTGTML). At 289–291 (GPE) the chain is on the cytoplasmic side. A helical transmembrane segment spans residues 292–312 (LLASIPATVYVVAIFMPLAGY). The Extracellular portion of the chain corresponds to 313 to 360 (ASGYGLATLFHLPPNCKRTVCLETGSQNVQLCTAILKLAFPPRFIGSM). The chain crosses the membrane as a helical span at residues 361–381 (YMFPLLYALFQSAEAGVFVLI). At 382-437 (YKMYGSEILHKREALDEDEDTDISYKKLKEEEMADTSYGTVGTDDLVMMETTQTAL) the chain is on the cytoplasmic side.

Belongs to the bile acid:sodium symporter (BASS) (TC 2.A.28) family. In terms of processing, activated following N-terminal proteolytic cleavage by thrombin and/or proteases. In terms of tissue distribution, highest expression in the brain and significantly above background levels in the eye, prostate, and whole embryo tissue preparations.

The protein localises to the cell membrane. Functionally, transporter for bile acids. This is Sodium/bile acid cotransporter 4 (Slc10a4) from Mus musculus (Mouse).